We begin with the raw amino-acid sequence, 705 residues long: Probable glutamate carboxypeptidase AMP1 (705 aa).

The Cytoplasmic portion of the chain corresponds to 1–24 (MSQPLTTRPTVTGISIIPFRQPPP). A helical; Signal-anchor for type II membrane protein transmembrane segment spans residues 25 to 42 (LCSFLFVIVLFVATFYTL). Topologically, residues 43–705 (HHPDAVTPPL…ASKALKGGFT (663 aa)) are extracellular. Residues Asn-74, Asn-137, and Asn-322 are each glycosylated (N-linked (GlcNAc...) asparagine). Positions 255-548 (GVVGGEKLSL…GIWGLLGILL (294 aa)) are catalytic. Residues His-356 and Asp-366 each contribute to the Zn(2+) site. Glu-403 functions as the Nucleophile in the catalytic mechanism. Glu-404, Asp-432, and His-514 together coordinate Zn(2+). A glycan (N-linked (GlcNAc...) asparagine) is linked at Asn-676.

This sequence belongs to the peptidase M28 family. M28B subfamily. It depends on Zn(2+) as a cofactor. In terms of tissue distribution, expressed in all plant parts. Highest levels in the bolt stem, inflorescence, root and silique. Low level in leaves.

The protein resides in the endoplasmic reticulum membrane. The enzyme catalyses Release of an unsubstituted, C-terminal glutamyl residue, typically from Ac-Asp-Glu or folylpoly-gamma-glutamates.. May modulate the level of one or more small signaling molecules that have a role in regulating meristem function. May play a role in balancing and restricting the meristem-promoting activity of auxin signaling. Involved in ethylene and giberellin (GA) signaling pathways or in a parallel pathway controlling cell and hypocotyl elongation and cellular organization. Involved in abscisic acid (ABA) signaling pathway. Plays a negative role in ABA-mediated seed germination and seedling development. Acts in association with LAMP1 to suppress ectopic stem cell niche formation in the shoot apical meristem (SAM) independently of cytokinin signaling pathway. Modulates responses to ABA, oxidative stress and abotic stress. Acts as a negative regulator of the ABA signaling pathway to modulate freezing and drought stress responses. Mediates carbon and amino acid metabolism. May be involved in the acquisition and/or maintenance of seed dormancy. Involved in the regulation of response to heat shock and plant defense. In Arabidopsis thaliana (Mouse-ear cress), this protein is Probable glutamate carboxypeptidase AMP1.